The sequence spans 529 residues: UDP-glucuronosyltransferase 2B9 (529 aa).

Positions 1–21 (MSVKWTSVILLIQLSFYFSSG) are cleaved as a signal peptide. Residues Asn-67, Asn-68, and Asn-88 are each glycosylated (N-linked (GlcNAc...) asparagine). The helical transmembrane segment at 494–514 (IGFLLACVATVIFVIMKCCLF) threads the bilayer.

Belongs to the UDP-glycosyltransferase family.

The protein localises to the microsome membrane. It is found in the endoplasmic reticulum membrane. The catalysed reaction is glucuronate acceptor + UDP-alpha-D-glucuronate = acceptor beta-D-glucuronoside + UDP + H(+). In terms of biological role, UDPGT is of major importance in the conjugation and subsequent elimination of potentially toxic xenobiotics and endogenous compounds. This isozyme is active on C18, C19, and C21 steroids, bile acids, and several xenobiotics including eugenol, 1-naphthol, and p-nitrophenol. The chain is UDP-glucuronosyltransferase 2B9 (UGT2B9) from Macaca fascicularis (Crab-eating macaque).